The chain runs to 469 residues: Putative dipeptidase SSP1012 (469 aa).

Residue His84 participates in Zn(2+) binding. Residue Asp86 is part of the active site. Asp115 is a Zn(2+) binding site. Catalysis depends on Glu149, which acts as the Proton acceptor. The Zn(2+) site is built by Glu150, Asp173, and His440.

It belongs to the peptidase M20A family. It depends on Zn(2+) as a cofactor.

In Staphylococcus saprophyticus subsp. saprophyticus (strain ATCC 15305 / DSM 20229 / NCIMB 8711 / NCTC 7292 / S-41), this protein is Putative dipeptidase SSP1012.